The following is a 581-amino-acid chain: UvrABC system protein C (581 aa).

Positions 15-94 (REPGVYLFEQ…IKRHRPPYNV (80 aa)) constitute a GIY-YIG domain. One can recognise a UVR domain in the interval 202–237 (GVLADPLRREMEAAAQNQEFERAANLRDKLGAVEAL).

Belongs to the UvrC family. In terms of assembly, interacts with UvrB in an incision complex.

The protein localises to the cytoplasm. The UvrABC repair system catalyzes the recognition and processing of DNA lesions. UvrC both incises the 5' and 3' sides of the lesion. The N-terminal half is responsible for the 3' incision and the C-terminal half is responsible for the 5' incision. The chain is UvrABC system protein C from Haloarcula marismortui (strain ATCC 43049 / DSM 3752 / JCM 8966 / VKM B-1809) (Halobacterium marismortui).